We begin with the raw amino-acid sequence, 543 residues long: Lipoyl synthase, apicoplast (543 aa).

A signal peptide spans 1-63; the sequence is MAYFFDFPTD…LFSLLSASQS (63 aa). [4Fe-4S] cluster contacts are provided by Cys252, Cys257, Cys263, Cys278, Cys282, Cys285, and Ser493. Residues 264-482 enclose the Radical SAM core domain; the sequence is WNGGTATLIL…QDIAEEMGFK (219 aa).

Belongs to the radical SAM superfamily. Lipoyl synthase family. [4Fe-4S] cluster serves as cofactor.

It is found in the plastid. The protein resides in the apicoplast. It catalyses the reaction [[Fe-S] cluster scaffold protein carrying a second [4Fe-4S](2+) cluster] + N(6)-octanoyl-L-lysyl-[protein] + 2 oxidized [2Fe-2S]-[ferredoxin] + 2 S-adenosyl-L-methionine + 4 H(+) = [[Fe-S] cluster scaffold protein] + N(6)-[(R)-dihydrolipoyl]-L-lysyl-[protein] + 4 Fe(3+) + 2 hydrogen sulfide + 2 5'-deoxyadenosine + 2 L-methionine + 2 reduced [2Fe-2S]-[ferredoxin]. The protein operates within protein modification; protein lipoylation via endogenous pathway; protein N(6)-(lipoyl)lysine from octanoyl-[acyl-carrier-protein]: step 2/2. In terms of biological role, catalyzes the radical-mediated insertion of two sulfur atoms into the C-6 and C-8 positions of the octanoyl moiety bound to the lipoyl domains of lipoate-dependent enzymes, thereby converting the octanoylated domains into lipoylated derivatives. The sequence is that of Lipoyl synthase, apicoplast from Toxoplasma gondii.